We begin with the raw amino-acid sequence, 319 residues long: Phospho-N-acetylmuramoyl-pentapeptide-transferase (319 aa).

The next 10 helical transmembrane spans lie at 5–25 (LIPF…FIGF), 51–71 (TMGG…VLIW), 79–99 (TWIL…DDGI), 116–136 (LGQI…HFAF), 149–169 (SFLF…AVNL), 172–192 (GLDG…AWIA), 197–217 (NWVI…FFIF), 224–244 (IFMG…VSIF), 252–272 (LLIG…VISF), and 299–319 (VDIV…IIWG).

Belongs to the glycosyltransferase 4 family. MraY subfamily. It depends on Mg(2+) as a cofactor.

It is found in the cell membrane. It carries out the reaction UDP-N-acetyl-alpha-D-muramoyl-L-alanyl-gamma-D-glutamyl-L-lysyl-D-alanyl-D-alanine + di-trans,octa-cis-undecaprenyl phosphate = Mur2Ac(oyl-L-Ala-gamma-D-Glu-L-Lys-D-Ala-D-Ala)-di-trans,octa-cis-undecaprenyl diphosphate + UMP. It functions in the pathway cell wall biogenesis; peptidoglycan biosynthesis. Catalyzes the initial step of the lipid cycle reactions in the biosynthesis of the cell wall peptidoglycan: transfers peptidoglycan precursor phospho-MurNAc-pentapeptide from UDP-MurNAc-pentapeptide onto the lipid carrier undecaprenyl phosphate, yielding undecaprenyl-pyrophosphoryl-MurNAc-pentapeptide, known as lipid I. This chain is Phospho-N-acetylmuramoyl-pentapeptide-transferase, found in Lactobacillus gasseri (strain ATCC 33323 / DSM 20243 / BCRC 14619 / CIP 102991 / JCM 1131 / KCTC 3163 / NCIMB 11718 / NCTC 13722 / AM63).